A 163-amino-acid polypeptide reads, in one-letter code: Bursicon (163 aa).

A signal peptide spans 1–23 (MKSTFLVVLELAFFLLPGRVLYA). 5 cysteine pairs are disulfide-bonded: Cys39-Cys88, Cys53-Cys102, Cys63-Cys123, Cys67-Cys125, and Cys85-Cys128. Residues 39–129 (CQVTPVIHVL…PLECMCRPCT (91 aa)) enclose the CTCK domain.

In terms of assembly, heterodimer of burs and pburs.

The protein localises to the secreted. In terms of biological role, final heterodimeric neurohormone released at the end of the molting cycle, involved in the sclerotization (tanning) of the insect cuticle, melanization and wing spreading. The chain is Bursicon (burs124) from Anopheles gambiae (African malaria mosquito).